The primary structure comprises 1284 residues: MEVTNLIEKCTKHSKDFATEVEKLWNDELSSESGLSRKTRNVIRNILRDITKSLTTDKKSKCFRILERSTINGEQIKDVYKTIFNNGVDVESRINTTGKYVLFTVMTYAAAELRLIKSDEIFALLSRFFNMICDIHRKYGCGNMFVGIPAALINLLEIDQINKLFSVFSTRYDAKTFIYTEYFLFLNINHYLLVSGSELFINVAYGPASFSSPISVPDYIMEALTFKACDHIMKSGDLKYTYAFTKKVKDLFNTKSDSVYQYVRLHEMSYDGVSEDTDDDDEVFAILNLSIDSSVDRYRNRVLLLTPEVASLRKEYSDVEPDYKYLMDEEVPAYDKHLPKPITNTGIEEPHATGGDKEEQEQQPVKVVQSKPDDGITPYNPFEDPDYVPTITKTVLGIADYQLVINKLIEWLDKCEEECGNGGEYKTELEEAKRKLTELNLELSDKLSKIRTLERDSVYKTERIDRLTKEIKELRDIQNGTDDGSDSSEIDKKTIRELRESLDREREMRTELERELDTIRDGKVEGSCQRELELSRMWLKQRDDDLRAEIDKRRNVEWELSRLRRDIKECDKYKEDLDKAKTTISNYVSRISTLESEIAKYQQDRDTLSVVRRELEEERRRVRDLESRLDECTRNQEDTQEVDALRSRIRELENKLADCMESGGGNLTEISRLQSKISDLERQLRECRGNATEISRLQYRITDLERQLNDCRRNNENNADTEREMQRLRDRITDLERQLSDCRRNNESNADMEREMQRLRDRIMDLDRQLNECKRDGNGTSSEEVNRLKTRIRDLERSLEICSKDESELYSAYKSELGRAREQISNLQESLRRERESDKTDSYYRRELTRERNKIVELEKELNKCFDTNHAKYIDEINSKKTRISDLERQLAACKSNGGSNGDMDQYKREIESLKRELAECRRGNNGSHSDCKYYDEEAREEVKRLRQELTQLHEDLKRARESDKNDSYYKRELERQRAKVIEVEKELERYFDDSRLAECKRHGDEMLRKIADLEKKLRDGGNGNGGNGCTSSCEFERKRIAVLEVEVRKSMETIKSLEKFMEFDRLQKDCADKLDREKERRMKAERDLEREIARKNCGGNPCERELESERSNVKRLEYQLDAEKEKVKFYKRELERDRYLSSRYLTSSSDPDEKPLPNYTFPRIEVEPLTTEDTEPKPVEVVPPSSDVTEPISSGVTPSVDAEPEHPQLSEYQTSVSQVAVTPPPKPETPQISEYQDYSELYSASNNTESKNVFSELAYLDDLDKLDDIDEYLLNNIMPEKTV.

Residues 340–383 (KPITNTGIEEPHATGGDKEEQEQQPVKVVQSKPDDGITPYNPFE) form a disordered region. The segment covering 348–357 (EEPHATGGDK) has biased composition (basic and acidic residues). 10 repeat units span residues 611–637 (VRRELEEERRRVRDLESRLDECTRNQE), 638–665 (DTQEVDALRSRIRELENKLADCMESGGG), 666–689 (NLTEISRLQSKISDLERQLRECRG), 690–720 (NATEISRLQYRITDLERQLNDCRRNNENNAD), 721–751 (TEREMQRLRDRITDLERQLSDCRRNNESNAD), 752–780 (MEREMQRLRDRIMDLDRQLNECKRDGNGT), 781–811 (SSEEVNRLKTRIRDLERSLEICSKDESELYS), 812–842 (AYKSELGRAREQISNLQESLRRERESDKTDS), 843–871 (YYRRELTRERNKIVELEKELNKCFDTNHA), and 872–912 (KYID…REIE). The 10 X approximate tandem repeats stretch occupies residues 611 to 912 (VRRELEEERR…DMDQYKREIE (302 aa)). A disordered region spans residues 1169–1234 (PLTTEDTEPK…PPKPETPQIS (66 aa)). A compositionally biased stretch (low complexity) spans 1180–1192 (VEVVPPSSDVTEP). The span at 1211-1221 (SEYQTSVSQVA) shows a compositional bias: polar residues.

This sequence belongs to the poxviridae A25 protein family. As to quaternary structure, interacts (via N-terminus) with protein A26.

The protein localises to the virion. Its function is as follows. Structural protein that forms a matrix surrounding the mature virion (MV) through interaction with protein A26. Presence of protein A25 in the virion structurally prevents direct virus-cell fusion mechanism. This is A-type inclusion protein A25 homolog (ATI) from Apodemus sylvaticus (European woodmouse).